The primary structure comprises 898 residues: MWKRSEQMKIKSGKCNMAAAMETEQLGVEIFETADCEENIESQDRPKLEPFYVERYSWSQLKKLLADTRKYHGYMMAKAPHDFMFVKRNDPDGPHSDRIYYLAMSGENRENTLFYSEIPKTINRAAVLMLSWKPLLDLFQATLDYGMYSREEELLRERKRIGTVGIASYDYHQGSGTFLFQAGSGIYHVKDGGPQGFTQQPLRPNLVETSCPNIRMDPKLCPADPDWIAFIHSNDIWISNIVTREERRLTYVHNELANMEEDARSAGVATFVLQEEFDRYSGYWWCPKAETTPSGGKILRILYEENDESEVEIIHVTSPMLETRRADSFRYPKTGTANPKVTFKMSEIMIDAEGRIIDVIDKELIQPFEILFEGVEYIARAGWTPEGKYAWSILLDRSQTRLQIVLISPELFIPVEDDVMERQRLIESVPDSVTPLIIYEETTDIWINIHDIFHVFPQSHEEEIEFIFASECKTGFRHLYKITSILKESKYKRSSGGLPAPSDFKCPIKEEIAITSGEWEVLGRHGSNIQVDEVRRLVYFEGTKDSPLEHHLYVVSYVNPGEVTRLTDRGYSHSCCISQHCDFFISKYSNQKNPHCVSLYKLSSPEDDPTCKTKEFWATILDSAGPLPDYTPPEIFSFESTTGFTLYGMLYKPHDLQPGKKYPTVLFIYGGPQVQLVNNRFKGVKYFRLNTLASLGYVVVVIDNRGSCHRGLKFEGAFKYKMGQIEIDDQVEGLQYLASRYDFIDLDRVGIHGWSYGGYLSLMALMQRSDIFRVAIAGAPVTLWIFYDTGYTERYMGHPDQNEQGYYLGSVAMQAEKFPSEPNRLLLLHGFLDENVHFAHTSILLSFLVRAGKPYDLQIYPQERHSIRVPESGEHYELHLLHYLQENLGSRIAALKVI.

Residues Ser755, Asp833, and His865 each act as charge relay system in the active site.

This sequence belongs to the peptidase S9B family. DPPIV subfamily. In terms of assembly, homodimer. Forms a ternary complex with NLRP1, composed of a DPP8 homodimer, one full-length NLRP1 protein, and one cleaved C-terminus of NLRP1 (NACHT, LRR and PYD domains-containing protein 1, C-terminus). Forms a ternary complex with CARD8, composed of a DPP8 homodimer, one full-length NLRP1 protein, and one cleaved C-terminus of CARD8 (Caspase recruitment domain-containing protein 8, C-terminus). In the ternary complex, only one subunit of the DPP8 homodimer is bound to NLRP1 or CARD8. In terms of tissue distribution, ubiquitously expressed, with highest levels in testis, placenta, prostate, muscle and brain.

The protein localises to the cytoplasm. It catalyses the reaction Release of an N-terminal dipeptide, Xaa-Yaa-|-Zaa-, from a polypeptide, preferentially when Yaa is Pro, provided Zaa is neither Pro nor hydroxyproline.. Its activity is regulated as follows. Inhibited by zinc. Inhibited by the serine proteinase inhibitor 4-(2-aminoethyl)benzenesulphonyl fluoride (AEBSF), and by di-isopropylfluorophosphate. Specifically inhibited by isoindoline derivatives. Inhibited by Val-boroPro (Talabostat, PT-100), a non-selective inhibitor, which triggers pyroptosis in monocytes and macrophages. Dipeptidyl peptidase that cleaves off N-terminal dipeptides from proteins having a Pro or Ala residue at position 2. Acts as a key inhibitor of caspase-1-dependent monocyte and macrophage pyroptosis in resting cells by preventing activation of NLRP1 and CARD8. Sequesters the cleaved C-terminal part of NLRP1 and CARD8, which respectively constitute the active part of the NLRP1 and CARD8 inflammasomes, in a ternary complex, thereby preventing their oligomerization and activation. The dipeptidyl peptidase activity is required to suppress NLRP1 and CARD8; however, neither NLRP1 nor CARD8 are bona fide substrates of DPP8, suggesting the existence of substrate(s) required for NLRP1 and CARD8 inhibition. The sequence is that of Dipeptidyl peptidase 8 from Homo sapiens (Human).